A 373-amino-acid chain; its full sequence is ATP phosphoribosyltransferase regulatory subunit (373 aa).

It belongs to the class-II aminoacyl-tRNA synthetase family. HisZ subfamily. Heteromultimer composed of HisG and HisZ subunits.

The protein localises to the cytoplasm. It functions in the pathway amino-acid biosynthesis; L-histidine biosynthesis; L-histidine from 5-phospho-alpha-D-ribose 1-diphosphate: step 1/9. Functionally, required for the first step of histidine biosynthesis. May allow the feedback regulation of ATP phosphoribosyltransferase activity by histidine. This chain is ATP phosphoribosyltransferase regulatory subunit, found in Rhizobium leguminosarum bv. trifolii (strain WSM2304).